Consider the following 363-residue polypeptide: UDP-N-acetylglucosamine--N-acetylmuramyl-(pentapeptide) pyrophosphoryl-undecaprenol N-acetylglucosamine transferase (363 aa).

UDP-N-acetyl-alpha-D-glucosamine is bound by residues 7–9, Asn-125, Ser-196, Ile-251, and Gln-296; that span reads TGG.

Belongs to the glycosyltransferase 28 family. MurG subfamily.

It is found in the cell membrane. It catalyses the reaction Mur2Ac(oyl-L-Ala-gamma-D-Glu-L-Lys-D-Ala-D-Ala)-di-trans,octa-cis-undecaprenyl diphosphate + UDP-N-acetyl-alpha-D-glucosamine = beta-D-GlcNAc-(1-&gt;4)-Mur2Ac(oyl-L-Ala-gamma-D-Glu-L-Lys-D-Ala-D-Ala)-di-trans,octa-cis-undecaprenyl diphosphate + UDP + H(+). Its pathway is cell wall biogenesis; peptidoglycan biosynthesis. Cell wall formation. Catalyzes the transfer of a GlcNAc subunit on undecaprenyl-pyrophosphoryl-MurNAc-pentapeptide (lipid intermediate I) to form undecaprenyl-pyrophosphoryl-MurNAc-(pentapeptide)GlcNAc (lipid intermediate II). The polypeptide is UDP-N-acetylglucosamine--N-acetylmuramyl-(pentapeptide) pyrophosphoryl-undecaprenol N-acetylglucosamine transferase (Latilactobacillus sakei subsp. sakei (strain 23K) (Lactobacillus sakei subsp. sakei)).